We begin with the raw amino-acid sequence, 455 residues long: L-serine dehydratase (455 aa).

Belongs to the iron-sulfur dependent L-serine dehydratase family. Requires [4Fe-4S] cluster as cofactor.

It catalyses the reaction L-serine = pyruvate + NH4(+). It participates in carbohydrate biosynthesis; gluconeogenesis. The protein is L-serine dehydratase (sdaA) of Helicobacter pylori (strain ATCC 700392 / 26695) (Campylobacter pylori).